A 257-amino-acid chain; its full sequence is 5'-nucleotidase SurE (257 aa).

A divalent metal cation contacts are provided by Asp-8, Asp-9, Ser-40, and Asn-92.

It belongs to the SurE nucleotidase family. Requires a divalent metal cation as cofactor.

It is found in the cytoplasm. It carries out the reaction a ribonucleoside 5'-phosphate + H2O = a ribonucleoside + phosphate. Nucleotidase that shows phosphatase activity on nucleoside 5'-monophosphates. The sequence is that of 5'-nucleotidase SurE from Rhizobium leguminosarum bv. trifolii (strain WSM2304).